The primary structure comprises 109 residues: MQFKLAFVSIALATLAVATPAPRGEPASSCSTGDLQCCNTVEPASSPSASTILGLLGIVIQGVDVLVGLTCSPITVIGLESGGCSAQAVCCTDNSNGGLISIGCLPVTL.

Positions M1–A18 are cleaved as a signal peptide. Disulfide bonds link C30/C90, C37/C84, C38/C71, and C91/C104.

Belongs to the fungal hydrophobin family. Self-assembles to form functional amyloid fibrils called rodlets. Self-assembly into fibrillar rodlets occurs spontaneously at hydrophobic:hydrophilic interfaces and the rodlets further associate laterally to form amphipathic monolayers.

Its subcellular location is the secreted. The protein resides in the cell wall. In terms of biological role, aerial growth, conidiation, and dispersal of filamentous fungi in the environment rely upon a capability of their secreting small amphipathic proteins called hydrophobins (HPBs) with low sequence identity. Class I can self-assemble into an outermost layer of rodlet bundles on aerial cell surfaces, conferring cellular hydrophobicity that supports fungal growth, development and dispersal; whereas Class II form highly ordered films at water-air interfaces through intermolecular interactions but contribute nothing to the rodlet structure. Hyd2 is a class I hydrophobin that may allow the dikaryotic mycelia to attach to the hydrophobic surface of the substrate. Higher expression in dikaryotic mycelia than in monokaryotic mycelia indicates that dikaryons require more hyd2 hydrophobin than the monokaryons, presumably for a higher rate of hyphal growth. This Lentinula edodes (Shiitake mushroom) protein is Class I hydrophobin 2.